Consider the following 508-residue polypeptide: Replication factor C large subunit (508 aa).

Position 43–50 (43–50 (GSPGIGKT)) interacts with ATP. Residues 425-508 (AVEHSGGVFE…DQQSGLSDFM (84 aa)) form a disordered region. Composition is skewed to acidic residues over residues 443-461 (GDSD…EESG) and 483-500 (TTDD…DDDQ).

This sequence belongs to the activator 1 small subunits family. RfcL subfamily. In terms of assembly, heteromultimer composed of small subunits (RfcS) and large subunits (RfcL).

Functionally, part of the RFC clamp loader complex which loads the PCNA sliding clamp onto DNA. The sequence is that of Replication factor C large subunit from Haloarcula marismortui (strain ATCC 43049 / DSM 3752 / JCM 8966 / VKM B-1809) (Halobacterium marismortui).